Consider the following 457-residue polypeptide: Multidrug resistance protein MdtK (457 aa).

12 consecutive transmembrane segments (helical) span residues 11 to 31 (LLAL…MGFV), 53 to 73 (IWLP…PVIA), 93 to 113 (WLAG…GYII), 127 to 147 (AVGY…FQVA), 160 to 180 (GMVM…IFIY), 189 to 209 (GGVG…LAMV), 243 to 263 (LPIA…ALLV), 276 to 296 (IALN…AAVT), 314 to 334 (AART…IFTV), 350 to 370 (VVTL…SDSI), 387 to 407 (IFYI…YILA), and 418 to 438 (PAGF…MMML).

Belongs to the multi antimicrobial extrusion (MATE) (TC 2.A.66.1) family. MdtK subfamily.

The protein localises to the cell inner membrane. Functionally, multidrug efflux pump that functions probably as a Na(+)/drug antiporter. This is Multidrug resistance protein MdtK from Escherichia coli (strain SE11).